The following is a 178-amino-acid chain: MSEFIPTWKQPSHPETLQVIKGATPYTASARSLVALPAGALFSKITTAIPAPKKTYTSVQTGPGLNIELMSDLVYCNHSCSPSLEFDMSTFEVRVSRDRPLSVGDELTFFYPSTEWDMVQPFNCFCGSQNCLGLIAGSQDMEASVLSRYWLNPHVKDLLAGKQMTVAPESTEEISLKA.

The region spanning 120 to 136 is the Post-SET domain; the sequence is QPFNCFCGSQNCLGLIA. Zn(2+) is bound by residues cysteine 124, cysteine 126, and cysteine 131.

The protein belongs to the class V-like SAM-binding methyltransferase superfamily.

It catalyses the reaction L-lysine + 2 S-adenosyl-L-methionine = N(6),N(6)-dimethyl-L-lysine + 2 S-adenosyl-L-homocysteine + 2 H(+). Its pathway is secondary metabolite biosynthesis; terpenoid biosynthesis. In terms of biological role, methyltransferase; part of the gene cluster that mediates the biosynthesis of flavunoidine, an alkaloidal terpenoid with a tetracyclic cage-like core connected to dimethylcadaverine via a C-N bond and acylated with 5,5-dimethyl-L-pipecolate. The tetracyclic core is synthesized by the terpene cyclase flvE and the cytochrome P450 monooxygenase flvD. The terpene cyclase flvE catalyzes the cyclization of farnesyl pyrophosphate (FPP) to form (1R,4R,5S)-(+)-acoradiene and the cytochrome P450 monooxygenase flvD is then responsible for oxidative conversion of (1R,4R,5S)-(+)-acoradiene into the tetracyclic cage present in the final product flavunoidine. In parallel, the N-methyltransferase flvH dimethylates L-lysine to give N,N-dimethyl-L-Lysin which is decarboxylated by flvG to afford dimethylcadaverine. The terpene cyclase-like protein flvF is the enzyme that attaches the dimethylcadaverine precusor at the C-7 of the tetracyclic cage to yield pre-flavunoidine. The cytochrome monooxygenase flvC hydroxylates the C-10 position of pre-flavunoidine whereas the NRPS flvI acylates the terpenoid core at the hydroxylated C-10 with dimethylpipecolate to yield final flavunoidine. The bifunctional enzyme flvA and the dehydrogenase flvB are responsible for the synthesis of the dimethylpipecolate precursor. The PLP-dependent lyase domain of flvA might use L-O-acetyl-homoserine and alpha-keto-isovalerate to form an intermediary ketone that can cyclize intramolecularly to yield an imine. The imine can be reduced by flvB to yield the 6-carboxylated pipecolate. The C-terminal alpha-KG-dependent oxygenase domain of flvA is then proposed to catalyze the decarboxylation to yield dimethylpipecolate. The sequence is that of Methyltransferase flvH from Aspergillus flavus (strain ATCC 200026 / FGSC A1120 / IAM 13836 / NRRL 3357 / JCM 12722 / SRRC 167).